Here is a 368-residue protein sequence, read N- to C-terminus: Probable staphylococcal-like nuclease CAN2 (368 aa).

The N-myristoyl glycine moiety is linked to residue G2. A lipid anchor (S-palmitoyl cysteine) is attached at C7. Residues D16–T56 are disordered. Low complexity predominate over residues P27 to P38. One can recognise a TNase-like domain in the interval N168 to S344. Residue D181 coordinates Ca(2+). R251 is a catalytic residue. D256 is a Ca(2+) binding site. Active-site residues include E259 and R293.

This sequence belongs to the thermonuclease family. Ca(2+) is required as a cofactor.

It is found in the cell membrane. Enzyme that catalyzes the hydrolysis of both DNA and RNA at the 5' position of the phosphodiester bond. This chain is Probable staphylococcal-like nuclease CAN2, found in Oryza sativa subsp. japonica (Rice).